A 47-amino-acid chain; its full sequence is Large ribosomal subunit protein bL36B (47 aa).

It belongs to the bacterial ribosomal protein bL36 family.

This is Large ribosomal subunit protein bL36B from Pectobacterium atrosepticum (strain SCRI 1043 / ATCC BAA-672) (Erwinia carotovora subsp. atroseptica).